The primary structure comprises 175 residues: Large ribosomal subunit protein uL10 (175 aa).

Belongs to the universal ribosomal protein uL10 family. Part of the ribosomal stalk of the 50S ribosomal subunit. The N-terminus interacts with L11 and the large rRNA to form the base of the stalk. The C-terminus forms an elongated spine to which L12 dimers bind in a sequential fashion forming a multimeric L10(L12)X complex.

Functionally, forms part of the ribosomal stalk, playing a central role in the interaction of the ribosome with GTP-bound translation factors. The polypeptide is Large ribosomal subunit protein uL10 (Desulfotalea psychrophila (strain LSv54 / DSM 12343)).